Here is a 709-residue protein sequence, read N- to C-terminus: Pentatricopeptide repeat-containing protein At5g42310, chloroplastic (709 aa).

The transit peptide at 1–54 directs the protein to the chloroplast; that stretch reads MLLLQQPPLVSTRFHSLYFLTHHHHHHHRFFQPPISAFSATTSASLPSPSPSSS. PPR repeat units lie at residues 196 to 230, 231 to 267, 268 to 302, 303 to 337, 338 to 372, 373 to 407, 408 to 442, 443 to 477, 478 to 512, 513 to 547, 548 to 582, 583 to 617, 618 to 652, and 653 to 687; these read TPLT…GYQS, DFVN…KLEL, DVQL…GLSA, KTAT…GIKP, RTRA…GVSP, DEHT…DVQP, NSFV…GVKP, DRQF…GIEP, DRVT…GCLP, CATT…GILP, NVVT…GLKP, SSTM…GLKP, SLLA…GVKP, and DVVT…GCKP.

It belongs to the PPR family. P subfamily. In terms of assembly, interacts with PDE338.

It localises to the plastid. It is found in the chloroplast stroma. The protein resides in the chloroplast thylakoid. The protein localises to the chloroplast. Its function is as follows. Required for chloroplast protein synthesis and accumulation of subunits of the thylakoid protein complexes. Activates psaC and petA translation by binding their 5'-UTRs. Required for the correct processing of petB and petD mRNAs. Interacts with the petB and petD intergenic region and is required for the generation of petB and petD monocistronic RNAs. This is Pentatricopeptide repeat-containing protein At5g42310, chloroplastic from Arabidopsis thaliana (Mouse-ear cress).